The chain runs to 178 residues: Large ribosomal subunit protein uL6 (178 aa).

Belongs to the universal ribosomal protein uL6 family. As to quaternary structure, part of the 50S ribosomal subunit.

In terms of biological role, this protein binds to the 23S rRNA, and is important in its secondary structure. It is located near the subunit interface in the base of the L7/L12 stalk, and near the tRNA binding site of the peptidyltransferase center. This Campylobacter lari (strain RM2100 / D67 / ATCC BAA-1060) protein is Large ribosomal subunit protein uL6.